The primary structure comprises 230 residues: Ribonuclease 3 (230 aa).

The region spanning 6–135 (TTELKERYGI…FLGALYLDQK (130 aa)) is the RNase III domain. E48 contributes to the Mg(2+) binding site. D52 is an active-site residue. Mg(2+) is bound by residues D121 and E124. E124 is a catalytic residue. The region spanning 161-230 (DHKTQLQEVL…AERALKSIPQ (70 aa)) is the DRBM domain.

The protein belongs to the ribonuclease III family. In terms of assembly, homodimer. Mg(2+) serves as cofactor.

It localises to the cytoplasm. It carries out the reaction Endonucleolytic cleavage to 5'-phosphomonoester.. Digests double-stranded RNA. Involved in the processing of primary rRNA transcript to yield the immediate precursors to the large and small rRNAs (23S and 16S). Processes some mRNAs, and tRNAs when they are encoded in the rRNA operon. Processes pre-crRNA and tracrRNA of type II CRISPR loci if present in the organism. This is Ribonuclease 3 from Enterococcus faecalis (strain ATCC 700802 / V583).